Here is a 60-residue protein sequence, read N- to C-terminus: Large ribosomal subunit protein uL30 (60 aa).

The protein belongs to the universal ribosomal protein uL30 family. Part of the 50S ribosomal subunit.

This is Large ribosomal subunit protein uL30 from Alcanivorax borkumensis (strain ATCC 700651 / DSM 11573 / NCIMB 13689 / SK2).